A 72-amino-acid chain; its full sequence is Translation initiation factor IF-1 (72 aa).

Positions 1–72 (MPKEEVLEFP…TKGRITYRFK (72 aa)) constitute an S1-like domain.

Belongs to the IF-1 family. Component of the 30S ribosomal translation pre-initiation complex which assembles on the 30S ribosome in the order IF-2 and IF-3, IF-1 and N-formylmethionyl-tRNA(fMet); mRNA recruitment can occur at any time during PIC assembly.

The protein localises to the cytoplasm. Functionally, one of the essential components for the initiation of protein synthesis. Stabilizes the binding of IF-2 and IF-3 on the 30S subunit to which N-formylmethionyl-tRNA(fMet) subsequently binds. Helps modulate mRNA selection, yielding the 30S pre-initiation complex (PIC). Upon addition of the 50S ribosomal subunit IF-1, IF-2 and IF-3 are released leaving the mature 70S translation initiation complex. The sequence is that of Translation initiation factor IF-1 from Chelativorans sp. (strain BNC1).